Reading from the N-terminus, the 402-residue chain is MDTKSFKRTLQQSDNYNRKGFGHKEEVMDAMTNEYQSDLIQEIRENNYRLQRGDVTIYLAQAFGFCWGVERAVAMAYETRQHFPQERIWITNEIIHNPSVNQRLRSMAVGFIPVENGQKDFTVVESGDVVILPAFGASVSEMQILNDKGCMIVDTTCPWVSKVWNSVEKHKKSDHTSIIHGKYNHEETIATSSFAGTYLIVLNLDQANYVANYILHGGDKNEFLEKFKNAHSQGFDPDRDLDYIGIANQTTMLKSETEEIGKLFEHTMLRKYGPIDFKDHFMSFNTICDATQERQDAIFELVKEPLSLMVVIGGYNSSNTTHLQEIAIERAIPSYHIDSAERILPGNRIEHKPLGDDLIITDNWLNEGKIVVGVTSGASTPDKVVEEVIEKIFAFKSSLVPG.

Cys-66 is a binding site for [4Fe-4S] cluster. His-96 provides a ligand contact to (2E)-4-hydroxy-3-methylbut-2-enyl diphosphate. A dimethylallyl diphosphate-binding site is contributed by His-96. His-96 lines the isopentenyl diphosphate pocket. Cys-157 is a [4Fe-4S] cluster binding site. His-185 serves as a coordination point for (2E)-4-hydroxy-3-methylbut-2-enyl diphosphate. Residue His-185 coordinates dimethylallyl diphosphate. Isopentenyl diphosphate is bound at residue His-185. Glu-187 (proton donor) is an active-site residue. (2E)-4-hydroxy-3-methylbut-2-enyl diphosphate is bound at residue Thr-250. A [4Fe-4S] cluster-binding site is contributed by Cys-288. 4 residues coordinate (2E)-4-hydroxy-3-methylbut-2-enyl diphosphate: Ser-317, Ser-318, Asn-319, and Ser-379. Dimethylallyl diphosphate is bound by residues Ser-317, Ser-318, Asn-319, and Ser-379. The isopentenyl diphosphate site is built by Ser-317, Ser-318, Asn-319, and Ser-379.

The protein belongs to the IspH family. The cofactor is [4Fe-4S] cluster.

The enzyme catalyses isopentenyl diphosphate + 2 oxidized [2Fe-2S]-[ferredoxin] + H2O = (2E)-4-hydroxy-3-methylbut-2-enyl diphosphate + 2 reduced [2Fe-2S]-[ferredoxin] + 2 H(+). It carries out the reaction dimethylallyl diphosphate + 2 oxidized [2Fe-2S]-[ferredoxin] + H2O = (2E)-4-hydroxy-3-methylbut-2-enyl diphosphate + 2 reduced [2Fe-2S]-[ferredoxin] + 2 H(+). It functions in the pathway isoprenoid biosynthesis; dimethylallyl diphosphate biosynthesis; dimethylallyl diphosphate from (2E)-4-hydroxy-3-methylbutenyl diphosphate: step 1/1. The protein operates within isoprenoid biosynthesis; isopentenyl diphosphate biosynthesis via DXP pathway; isopentenyl diphosphate from 1-deoxy-D-xylulose 5-phosphate: step 6/6. In terms of biological role, catalyzes the conversion of 1-hydroxy-2-methyl-2-(E)-butenyl 4-diphosphate (HMBPP) into a mixture of isopentenyl diphosphate (IPP) and dimethylallyl diphosphate (DMAPP). Acts in the terminal step of the DOXP/MEP pathway for isoprenoid precursor biosynthesis. The protein is 4-hydroxy-3-methylbut-2-enyl diphosphate reductase of Microcystis aeruginosa (strain NIES-843 / IAM M-2473).